Here is a 598-residue protein sequence, read N- to C-terminus: Mitogen-activated protein kinase 19 (598 aa).

In terms of domain architecture, Protein kinase spans 25-316 (YRILEVIGKG…AAEALADPYF (292 aa)). ATP-binding positions include 31-39 (IGKGSYGVV) and lysine 54. Aspartate 151 serves as the catalytic Proton acceptor. A Phosphothreonine modification is found at threonine 187. Residues 187–189 (TDY) carry the TXY motif. Tyrosine 189 carries the phosphotyrosine modification. Threonine 192 carries the post-translational modification Phosphothreonine. The disordered stretch occupies residues 396–486 (GKSGPVIPPD…VTYENDRNLK (91 aa)). Positions 414-425 (SAVHSSAVNSNA) are enriched in low complexity.

This sequence belongs to the protein kinase superfamily. CMGC Ser/Thr protein kinase family. MAP kinase subfamily. Dually phosphorylated on Thr-187 and Tyr-189, which activates the enzyme.

It carries out the reaction L-seryl-[protein] + ATP = O-phospho-L-seryl-[protein] + ADP + H(+). The enzyme catalyses L-threonyl-[protein] + ATP = O-phospho-L-threonyl-[protein] + ADP + H(+). With respect to regulation, activated by threonine and tyrosine phosphorylation. The protein is Mitogen-activated protein kinase 19 (MPK19) of Arabidopsis thaliana (Mouse-ear cress).